Reading from the N-terminus, the 350-residue chain is Putative ankyrin repeat protein RBE_0589 (350 aa).

3 ANK repeats span residues 81–110 (DGFT…NPNI), 114–151 (DIVT…EPTD), and 153–182 (SGWT…NLDI).

This chain is Putative ankyrin repeat protein RBE_0589, found in Rickettsia bellii (strain RML369-C).